The following is a 217-amino-acid chain: Proteasome subunit beta type-6-A like protein (217 aa).

The propeptide at Met-1–Gly-16 is removed in mature form. Thr-17 serves as the catalytic Nucleophile.

This sequence belongs to the peptidase T1B family. As to quaternary structure, the 26S proteasome consists of a 20S proteasome core and two 19S regulatory subunits. The 20S proteasome core is composed of 28 subunits that are arranged in four stacked rings, resulting in a barrel-shaped structure. The two end rings are each formed by seven alpha subunits, and the two central rings are each formed by seven beta subunits. The catalytic chamber with the active sites is on the inside of the barrel.

The protein resides in the cytoplasm. The protein localises to the nucleus. The catalysed reaction is Cleavage of peptide bonds with very broad specificity.. The proteasome is a multicatalytic proteinase complex which is characterized by its ability to cleave peptides with Arg, Phe, Tyr, Leu, and Glu adjacent to the leaving group at neutral or slightly basic pH. The proteasome has an ATP-dependent proteolytic activity. This subunit is involved in antigen processing to generate class I binding peptides. In Salmo salar (Atlantic salmon), this protein is Proteasome subunit beta type-6-A like protein (psmb6l-a).